Reading from the N-terminus, the 369-residue chain is Protein FAM187B (369 aa).

Positions 1 to 17 are cleaved as a signal peptide; sequence MPPMLWLLLNFAAPALG. Over 18–333 the chain is Extracellular; it reads FYFSISCPSG…PGRADSVLKG (316 aa). Residues N45, N68, and N130 are each glycosylated (N-linked (GlcNAc...) asparagine). A helical transmembrane segment spans residues 334–354; that stretch reads LKLVLLVGTVLVLLGALLKFI. Topologically, residues 355–369 are cytoplasmic; sequence RPSPGKRSKQVLMVK.

Belongs to the FAM187 family.

It localises to the membrane. The chain is Protein FAM187B (FAM187B) from Macaca fascicularis (Crab-eating macaque).